Consider the following 183-residue polypeptide: Dual-action ribosomal maturation protein DarP (183 aa).

The disordered stretch occupies residues 1–20; the sequence is MKQKYEDWLNDVPDNQEDDE.

It belongs to the DarP family.

It localises to the cytoplasm. Member of a network of 50S ribosomal subunit biogenesis factors which assembles along the 30S-50S interface, preventing incorrect 23S rRNA structures from forming. Promotes peptidyl transferase center (PTC) maturation. The sequence is that of Dual-action ribosomal maturation protein DarP from Pectobacterium carotovorum subsp. carotovorum (strain PC1).